The following is a 73-amino-acid chain: MKSFYGILCVAVLMMFHLEMSESRSNFQMLLEDPDYLSLEKRCLNVGQKCTPGNNKCCHTYICSSLDSKCFYR.

The first 23 residues, 1–23, serve as a signal peptide directing secretion; the sequence is MKSFYGILCVAVLMMFHLEMSES. 3 disulfides stabilise this stretch: C43–C58, C50–C63, and C57–C70.

Expressed outside of acontia.

Its subcellular location is the secreted. It localises to the nematocyst. Functionally, putative neurotoxin. This is Putative neurotoxin NaH-Cpp1a from Calliactis polypus (Hermit crab anemone).